The chain runs to 382 residues: Mannitol-1-phosphate 5-dehydrogenase (382 aa).

3-14 (ALHFGAGNIGRG) serves as a coordination point for NAD(+).

It belongs to the mannitol dehydrogenase family.

The catalysed reaction is D-mannitol 1-phosphate + NAD(+) = beta-D-fructose 6-phosphate + NADH + H(+). This is Mannitol-1-phosphate 5-dehydrogenase from Pectobacterium atrosepticum (strain SCRI 1043 / ATCC BAA-672) (Erwinia carotovora subsp. atroseptica).